Here is a 341-residue protein sequence, read N- to C-terminus: Biotin synthase (341 aa).

Positions 40–267 (AEIQVSTLLS…RSMVRLSAGR (228 aa)) constitute a Radical SAM core domain. [4Fe-4S] cluster-binding residues include C55, C59, and C62. 4 residues coordinate [2Fe-2S] cluster: C99, C130, C190, and R262.

The protein belongs to the radical SAM superfamily. Biotin synthase family. Homodimer. The cofactor is [4Fe-4S] cluster. [2Fe-2S] cluster is required as a cofactor.

It carries out the reaction (4R,5S)-dethiobiotin + (sulfur carrier)-SH + 2 reduced [2Fe-2S]-[ferredoxin] + 2 S-adenosyl-L-methionine = (sulfur carrier)-H + biotin + 2 5'-deoxyadenosine + 2 L-methionine + 2 oxidized [2Fe-2S]-[ferredoxin]. The protein operates within cofactor biosynthesis; biotin biosynthesis; biotin from 7,8-diaminononanoate: step 2/2. Its function is as follows. Catalyzes the conversion of dethiobiotin (DTB) to biotin by the insertion of a sulfur atom into dethiobiotin via a radical-based mechanism. This chain is Biotin synthase, found in Xylella fastidiosa (strain M12).